The following is a 269-amino-acid chain: Signal recognition particle receptor subunit beta (269 aa).

Residues 35 to 55 (LLSVAVAVLAVLLTLVFWKFI) form a helical membrane-spanning segment. GTP contacts are provided by residues 69–77 (GLCDSGKTL) and 90–93 (TQTS). S110 bears the Phosphoserine mark. G118 contacts GTP. T212 is modified (phosphothreonine). GTP is bound at residue A246.

The protein belongs to the SRP receptor beta subunit family. Heterodimer with SRPRA.

It is found in the endoplasmic reticulum membrane. Component of the signal recognition particle (SRP) complex receptor (SR). Ensures, in conjunction with the SRP complex, the correct targeting of the nascent secretory proteins to the endoplasmic reticulum membrane system. May mediate the membrane association of SR. This is Signal recognition particle receptor subunit beta (Srprb) from Rattus norvegicus (Rat).